The primary structure comprises 434 residues: GTPase Obg (434 aa).

Residues 1–158 enclose the Obg domain; that stretch reads MFIDRAKIYV…RWLYLELKLL (158 aa). Residues 159-328 form the OBG-type G domain; that stretch reads ADVGLLGLPN…LLELMEKYVK (170 aa). GTP is bound by residues 165 to 172, 190 to 194, 211 to 214, 280 to 283, and 309 to 311; these read GLPNAGKS, FTTKT, DIPG, NKID, and SAK. Positions 172 and 192 each coordinate Mg(2+). The OCT domain maps to 347–425; it reads KQENKKQEIP…IGNYVFKYNS (79 aa).

This sequence belongs to the TRAFAC class OBG-HflX-like GTPase superfamily. OBG GTPase family. In terms of assembly, monomer. The cofactor is Mg(2+).

The protein localises to the cytoplasm. An essential GTPase which binds GTP, GDP and possibly (p)ppGpp with moderate affinity, with high nucleotide exchange rates and a fairly low GTP hydrolysis rate. Plays a role in control of the cell cycle, stress response, ribosome biogenesis and in those bacteria that undergo differentiation, in morphogenesis control. This Dictyoglomus turgidum (strain DSM 6724 / Z-1310) protein is GTPase Obg.